The following is a 523-amino-acid chain: Putative L-type lectin-domain containing receptor kinase V.6 (523 aa).

The N-terminal stretch at 1–27 (MFSEVKVLQIVLVQWLTLFSFTYNSHG) is a signal peptide. The tract at residues 28 to 242 (TYILDGSAVF…TGSIRALHYM (215 aa)) is legume-lectin like. Over 28 to 279 (TYILDGSAVF…KPSDRLRTVL (252 aa)) the chain is Extracellular. N-linked (GlcNAc...) asparagine glycosylation is found at asparagine 47, asparagine 59, asparagine 112, and asparagine 171. The chain crosses the membrane as a helical span at residues 280–300 (AVCLTLALFAVFLASGIGFVF). The Cytoplasmic segment spans residues 301–523 (YLRHKKVKEV…TGRAVRVKFF (223 aa)). Positions 335–523 (FKEKQLLGKG…TGRAVRVKFF (189 aa)) constitute a Protein kinase domain. ATP-binding positions include 341–349 (LGKGGFGQV) and lysine 364. Residue aspartate 464 is the Proton acceptor of the active site.

In the C-terminal section; belongs to the protein kinase superfamily. Ser/Thr protein kinase family. This sequence in the N-terminal section; belongs to the leguminous lectin family.

It localises to the cell membrane. It catalyses the reaction L-seryl-[protein] + ATP = O-phospho-L-seryl-[protein] + ADP + H(+). It carries out the reaction L-threonyl-[protein] + ATP = O-phospho-L-threonyl-[protein] + ADP + H(+). This Arabidopsis thaliana (Mouse-ear cress) protein is Putative L-type lectin-domain containing receptor kinase V.6 (LECRK56).